A 169-amino-acid polypeptide reads, in one-letter code: Anaerobic nitrite reductase NSHB2 (169 aa).

Residues 16–166 (SFSEEQEALV…LVAAIKQEMK (151 aa)) enclose the Globin domain. The short motif at 49-53 (EVAPS) is the Homodimerization element. The heme b site is built by Ser59, Lys73, His77, Arg107, Thr111, and His112. A Homodimerization motif is present at residues 119–131 (DAHFEVTRFALLE).

It belongs to the plant globin family. Homodimer. It depends on heme b as a cofactor. In terms of tissue distribution, expressed in leaves, but not in roots. Present in embryonic organs including embryos, coleoptiles and seminal roots.

It is found in the cytoplasm. It localises to the nucleus. It carries out the reaction Fe(III)-heme b-[protein] + nitric oxide + H2O = Fe(II)-heme b-[protein] + nitrite + 2 H(+). Functionally, phytoglobin that reduces nitrite to nitric oxide under anoxic conditions (e.g. during flooding or in waterlogged soil). May not function as an oxygen storage or transport protein. Has an unusually high affinity for O(2) through an hexacoordinate heme iron because of a very low dissociation constant. Promotes tolerance to low potassium K(+) conditions. The protein is Anaerobic nitrite reductase NSHB2 of Oryza sativa subsp. japonica (Rice).